Consider the following 244-residue polypeptide: NAD(P)H-quinone oxidoreductase subunit K (244 aa).

Residues cysteine 51, cysteine 52, cysteine 116, and cysteine 147 each coordinate [4Fe-4S] cluster.

It belongs to the complex I 20 kDa subunit family. As to quaternary structure, NDH-1 can be composed of about 15 different subunits; different subcomplexes with different compositions have been identified which probably have different functions. It depends on [4Fe-4S] cluster as a cofactor.

Its subcellular location is the cellular thylakoid membrane. It carries out the reaction a plastoquinone + NADH + (n+1) H(+)(in) = a plastoquinol + NAD(+) + n H(+)(out). It catalyses the reaction a plastoquinone + NADPH + (n+1) H(+)(in) = a plastoquinol + NADP(+) + n H(+)(out). NDH-1 shuttles electrons from an unknown electron donor, via FMN and iron-sulfur (Fe-S) centers, to quinones in the respiratory and/or the photosynthetic chain. The immediate electron acceptor for the enzyme in this species is believed to be plastoquinone. Couples the redox reaction to proton translocation, and thus conserves the redox energy in a proton gradient. Cyanobacterial NDH-1 also plays a role in inorganic carbon-concentration. This is NAD(P)H-quinone oxidoreductase subunit K from Synechococcus sp. (strain JA-3-3Ab) (Cyanobacteria bacterium Yellowstone A-Prime).